A 590-amino-acid polypeptide reads, in one-letter code: MNAFLLQLAIYLAVLLVLARPLGTYMARVFGDAPSRAHWLRSVERLLYRVAGVDPRAEMGWKHYALAVIAVNVLGALAVYALQRLQPWLPLNPQGFGAVTPDSSFNTAVSFVTNTNWQGYSGESTMSYLTQMLGLAVQNFLSAATGIAVVIALIRGFARHSARTIGNFWVDFTRGTLYVLLPLSVIVAVFFVSQGAIQNFDAYKEVTTVAATTYDNPKTDAQGNPIKDAQGNPVTEKATTQKQTLPMGPIASQEAIKMLGTNGGGPFNANSAHPYENPTPLANFVQMLSIFLIPAALCFTFGAMVGDRRQGWAVLASMTILFVVLAVFEMWAELHANPMLAHLGVDQAVGNMEGKETRFGVVASSLFVTITTAASCGAVNAMHDSLTALGGFVPMFLIQLGEVVFGGVGSGLYGMLVYAILAVFIAGLMIGRTPEYLGKKIEVFEMKMTSIAILVTPLLVLVGTAVAVLASGGRAGIFNPGTHGFSEVLYAFSSAANNNGSAFAGLSANTPFYNVALGIVMWLGRFWIIVPVLAMAGTFAAKKRLPVTVGTLPTHGPLFVVLLIGSVLLVGALTYIPALALGPIAEHLAR.

4 helical membrane passes run 3 to 23 (AFLL…RPLG), 63 to 83 (HYAL…YALQ), 134 to 154 (GLAV…IALI), and 177 to 197 (LYVL…QGAI). A disordered region spans residues 217–244 (PKTDAQGNPIKDAQGNPVTEKATTQKQT). 8 helical membrane-spanning segments follow: residues 284-304 (FVQM…FGAM), 312-332 (WAVL…EMWA), 359-379 (FGVV…CGAV), 388-408 (ALGG…FGGV), 411-431 (GLYG…LMIG), 450-470 (SIAI…AVLA), 515-535 (VALG…VLAM), and 558-578 (LFVV…YIPA).

The protein belongs to the KdpA family. In terms of assembly, the system is composed of three essential subunits: KdpA, KdpB and KdpC.

It localises to the cell inner membrane. Functionally, part of the high-affinity ATP-driven potassium transport (or Kdp) system, which catalyzes the hydrolysis of ATP coupled with the electrogenic transport of potassium into the cytoplasm. This subunit binds the periplasmic potassium ions and delivers the ions to the membrane domain of KdpB through an intramembrane tunnel. In Ralstonia nicotianae (strain ATCC BAA-1114 / GMI1000) (Ralstonia solanacearum), this protein is Potassium-transporting ATPase potassium-binding subunit.